We begin with the raw amino-acid sequence, 296 residues long: Ribosomal protein L11 methyltransferase (296 aa).

Thr-145, Gly-166, Asp-188, and Asn-230 together coordinate S-adenosyl-L-methionine.

This sequence belongs to the methyltransferase superfamily. PrmA family.

Its subcellular location is the cytoplasm. It carries out the reaction L-lysyl-[protein] + 3 S-adenosyl-L-methionine = N(6),N(6),N(6)-trimethyl-L-lysyl-[protein] + 3 S-adenosyl-L-homocysteine + 3 H(+). Functionally, methylates ribosomal protein L11. In Photorhabdus laumondii subsp. laumondii (strain DSM 15139 / CIP 105565 / TT01) (Photorhabdus luminescens subsp. laumondii), this protein is Ribosomal protein L11 methyltransferase.